The chain runs to 303 residues: N-acetyl-D-glucosamine kinase (303 aa).

ATP contacts are provided by residues 4–11 (GFDIGGTK) and 133–140 (GVGGGLVL). The Zn(2+) site is built by H157, C177, C179, and C184.

It belongs to the ROK (NagC/XylR) family. NagK subfamily.

The enzyme catalyses N-acetyl-D-glucosamine + ATP = N-acetyl-D-glucosamine 6-phosphate + ADP + H(+). Its pathway is cell wall biogenesis; peptidoglycan recycling. In terms of biological role, catalyzes the phosphorylation of N-acetyl-D-glucosamine (GlcNAc) derived from cell-wall degradation, yielding GlcNAc-6-P. In Salmonella newport (strain SL254), this protein is N-acetyl-D-glucosamine kinase.